A 487-amino-acid chain; its full sequence is Schwannomin-interacting protein 1 (487 aa).

Disordered regions lie at residues 1-74 (MERS…VSAL), 88-221 (VIDE…PVPP), 236-260 (FREQ…NERE), and 308-354 (SGSD…SLDD). Over residues 14–27 (DQGKHSDSDYREDG) the composition is skewed to basic and acidic residues. A compositionally biased stretch (low complexity) spans 32 to 67 (SDAGSSSSSSRASSQSNSTKVTPCSECKSSSSPGGS). Positions 92–106 (WAPEEDGEEEEEEDE) are enriched in acidic residues. 2 stretches are compositionally biased toward basic and acidic residues: residues 107 to 123 (RDQR…REPG) and 153 to 162 (HQHDPQDLRH). Serine 117 is subject to Phosphoserine. Residues 242–255 (RNQGQARTNSTSAQ) are compositionally biased toward polar residues. Residues 309-323 (GSDKDSDADDSKTET) are compositionally biased toward basic and acidic residues. The segment covering 324–335 (SLDTPLSPMSKQ) has biased composition (polar residues). Over residues 344–354 (TTEEESESLDD) the composition is skewed to acidic residues. Positions 424–458 (IGQLQVIVNDLHSQIESLNEELVQLLLIRDELHTE) form a coiled coil.

It belongs to the SCHIP1 family. In terms of assembly, homooligomer (via coiled coil domain). Interacts with NF2; the interaction is direct. Interacts with ANK3. In terms of tissue distribution, preferentially expressed in brain, skeletal muscles and heart. Also expressed in detected in pancreas, kidney, liver, lung, and placenta.

Its subcellular location is the cytoplasm. The chain is Schwannomin-interacting protein 1 from Homo sapiens (Human).